Reading from the N-terminus, the 209-residue chain is Na(+)-translocating NADH-quinone reductase subunit D (209 aa).

5 helical membrane-spanning segments follow: residues 42–62 (VVMT…ISLI), 66–86 (IPNS…VIVV), 95–115 (FEIS…CIVM), 131–151 (FMDG…VGFL), and 178–198 (NGLF…IWAL).

The protein belongs to the NqrDE/RnfAE family. Composed of six subunits; NqrA, NqrB, NqrC, NqrD, NqrE and NqrF.

The protein resides in the cell inner membrane. The catalysed reaction is a ubiquinone + n Na(+)(in) + NADH + H(+) = a ubiquinol + n Na(+)(out) + NAD(+). In terms of biological role, NQR complex catalyzes the reduction of ubiquinone-1 to ubiquinol by two successive reactions, coupled with the transport of Na(+) ions from the cytoplasm to the periplasm. NqrA to NqrE are probably involved in the second step, the conversion of ubisemiquinone to ubiquinol. This is Na(+)-translocating NADH-quinone reductase subunit D from Serratia proteamaculans (strain 568).